We begin with the raw amino-acid sequence, 444 residues long: Retinoic acid receptor alpha-A (444 aa).

A modulating region spans residues 1–71 (MYESVDVNPF…PPSPPPPPRI (71 aa)). A compositionally biased stretch (polar residues) spans 35 to 46 (SIRHQHWSGSNH). The interval 35-67 (SIRHQHWSGSNHSIETQSTSSEEIVPSPPSPPP) is disordered. Over residues 47-58 (SIETQSTSSEEI) the composition is skewed to low complexity. Positions 72-147 (YKPCFVCQDK…VGMSKESVRN (76 aa)) form a DNA-binding region, nuclear receptor. NR C4-type zinc fingers lie at residues 75 to 95 (CFVC…CEGC) and 111 to 130 (CHRE…CQYC). Residues 148 to 169 (DRNKKKKEEKKPECTENYTLSP) are hinge. The region spanning 170 to 404 (DTEQMIDRVR…PLIQEMLENS (235 aa)) is the NR LBD domain. The 9aaTAD signature appears at 395–403 (PLIQEMLEN). A disordered region spans residues 402–444 (ENSEGLESSSGAQGSRASATTPGSCSPSLSPNSAQSSPPTQSP).

This sequence belongs to the nuclear hormone receptor family. NR1 subfamily. In terms of assembly, heterodimer; with an rxr molecule. Binds DNA preferentially as a rar/rxr heterodimer. In the embryo, zygotic expression largely overlaps that of rarab, with high levels in hindbrain, lateral mesoderm and tail bud. In the adult, strong expression in brain and muscle, weaker expression in ovary, liver and digestive tract.

The protein resides in the nucleus. Its function is as follows. Receptor for retinoic acid. Retinoic acid receptors bind as heterodimers to their target response elements in response to their ligands, all-trans or 9-cis retinoic acid, and regulate gene expression in various biological processes. The rar/rxr heterodimers bind to the retinoic acid response elements (RARE) composed of tandem 5'-AGGTCA-3' sites known as DR1-DR5. Required for hindbrain patterning. The polypeptide is Retinoic acid receptor alpha-A (Danio rerio (Zebrafish)).